The sequence spans 233 residues: Octanoyltransferase (233 aa).

One can recognise a BPL/LPL catalytic domain in the interval P34–L212. Residues R76–H83, A143–G145, and G156–A158 each bind substrate. Residue C174 is the Acyl-thioester intermediate of the active site.

It belongs to the LipB family.

It is found in the cytoplasm. It catalyses the reaction octanoyl-[ACP] + L-lysyl-[protein] = N(6)-octanoyl-L-lysyl-[protein] + holo-[ACP] + H(+). It participates in protein modification; protein lipoylation via endogenous pathway; protein N(6)-(lipoyl)lysine from octanoyl-[acyl-carrier-protein]: step 1/2. Catalyzes the transfer of endogenously produced octanoic acid from octanoyl-acyl-carrier-protein onto the lipoyl domains of lipoate-dependent enzymes. Lipoyl-ACP can also act as a substrate although octanoyl-ACP is likely to be the physiological substrate. The sequence is that of Octanoyltransferase from Synechococcus elongatus (strain ATCC 33912 / PCC 7942 / FACHB-805) (Anacystis nidulans R2).